Consider the following 268-residue polypeptide: MHDLWPTILLGIIEGLSEFLPISSTGHLLVAEHWLGERSETFNIFIQLGAVLAVCLIYKERLSSFLFLWKDREKLPYFLKLSVAFIITSILGLWVKKMGWELPKDLGPVIIAIFGGAFWIYFTEKVSSQRQSFVEEISWPTAIAVGASQVVAGVLPGFSRSAATILMAVLLGVSRPAATEFAFLLGIPTMFAASLFAWIEETHFLKNPSLDSPLTLATGFCVSAVVAFISVKWLLSYIQTHTFIPFVWYRVGLGFFLIALVALGWKTQ.

A run of 6 helical transmembrane segments spans residues 39–59 (SETF…LIYK), 75–95 (LPYF…GLWV), 106–126 (LGPV…TEKV), 179–199 (TEFA…FAWI), 214–234 (LTLA…VKWL), and 243–263 (FIPF…LVAL).

It belongs to the UppP family.

Its subcellular location is the cell inner membrane. It carries out the reaction di-trans,octa-cis-undecaprenyl diphosphate + H2O = di-trans,octa-cis-undecaprenyl phosphate + phosphate + H(+). Catalyzes the dephosphorylation of undecaprenyl diphosphate (UPP). Confers resistance to bacitracin. This Methylacidiphilum infernorum (isolate V4) (Methylokorus infernorum (strain V4)) protein is Undecaprenyl-diphosphatase.